We begin with the raw amino-acid sequence, 173 residues long: Crossover junction endodeoxyribonuclease RuvC (173 aa).

Catalysis depends on residues Asp-8, Glu-68, and Asp-140. Mg(2+)-binding residues include Asp-8, Glu-68, and Asp-140.

This sequence belongs to the RuvC family. In terms of assembly, homodimer which binds Holliday junction (HJ) DNA. The HJ becomes 2-fold symmetrical on binding to RuvC with unstacked arms; it has a different conformation from HJ DNA in complex with RuvA. In the full resolvosome a probable DNA-RuvA(4)-RuvB(12)-RuvC(2) complex forms which resolves the HJ. Mg(2+) serves as cofactor.

It localises to the cytoplasm. The enzyme catalyses Endonucleolytic cleavage at a junction such as a reciprocal single-stranded crossover between two homologous DNA duplexes (Holliday junction).. Functionally, the RuvA-RuvB-RuvC complex processes Holliday junction (HJ) DNA during genetic recombination and DNA repair. Endonuclease that resolves HJ intermediates. Cleaves cruciform DNA by making single-stranded nicks across the HJ at symmetrical positions within the homologous arms, yielding a 5'-phosphate and a 3'-hydroxyl group; requires a central core of homology in the junction. The consensus cleavage sequence is 5'-(A/T)TT(C/G)-3'. Cleavage occurs on the 3'-side of the TT dinucleotide at the point of strand exchange. HJ branch migration catalyzed by RuvA-RuvB allows RuvC to scan DNA until it finds its consensus sequence, where it cleaves and resolves the cruciform DNA. The protein is Crossover junction endodeoxyribonuclease RuvC of Saccharophagus degradans (strain 2-40 / ATCC 43961 / DSM 17024).